The chain runs to 490 residues: One cut domain family member 3 (490 aa).

Disordered stretches follow at residues 130–155 (GAHGGHPHAHPHPATAPPPPPPQRLA), 193–213 (LSPLPSALPPALHSAPQPPPP), and 287–316 (HGPHSGGGGPGGGGGAGGGSGGPGAGAAAE). A compositionally biased stretch (pro residues) spans 143–152 (ATAPPPPPPQ). Over residues 290-311 (HSGGGGPGGGGGAGGGSGGPGA) the composition is skewed to gly residues. Residues 309–395 (PGAGAAAEEI…QRMSALRLAA (87 aa)) constitute a DNA-binding region (CUT). Residues 411-470 (PKKQRLVFTDLQRRTLIAIFKENKRPSKEMQATISQQLGLELNTVSNFFMNARRRCMNRW) constitute a DNA-binding region (homeobox).

It belongs to the CUT homeobox family. Specifically expressed in brain, stomach and gut. Within the gut, expressed only in duodenum and jejunum.

It is found in the nucleus. Its function is as follows. Transcriptional activator. Binds the consensus DNA sequence 5'-DHWATTGAYTWWD-3' on a variety of gene promoters such as those of HNF3B and TTR. In Mus musculus (Mouse), this protein is One cut domain family member 3 (Onecut3).